We begin with the raw amino-acid sequence, 508 residues long: Monocarboxylate transporter 9 (508 aa).

Over 1 to 12 the chain is Cytoplasmic; it reads MEFQKSPDGGWG. 12 consecutive transmembrane segments (helical) span residues 13–33, 53–73, 80–100, 102–122, 137–157, 164–184, 303–323, 341–361, 370–390, 396–416, 431–451, and 460–480; these read WVIV…PLAV, WVGS…SLFV, PVTI…SLAP, IYFL…LLYT, GLAL…YAAL, FYGL…ILAC, VFSA…PPSL, MPLI…LGIL, LYLY…IPFA, LAIL…FPYV, GILM…VGWF, and IAFY…LLAI. Residues 481 to 508 are Cytoplasmic-facing; it reads LPCWDMCNKKLPKPAVPTTFFYKVASNV.

It belongs to the major facilitator superfamily. Monocarboxylate porter (TC 2.A.1.13) family.

The protein resides in the cell membrane. It carries out the reaction creatine(in) = creatine(out). The enzyme catalyses (R)-carnitine(in) = (R)-carnitine(out). In terms of biological role, extracellular pH-and Na(+)-sensitive low-affinity creatine transporter. Also functions as a pH-independent carnitine efflux transporter. The polypeptide is Monocarboxylate transporter 9 (Slc16a9) (Mus musculus (Mouse)).